The sequence spans 311 residues: Forkhead box protein R2 (311 aa).

Disordered stretches follow at residues 56 to 76 (PPEM…PCEP) and 90 to 171 (LGSQ…QSPE). Over residues 115–128 (QKDEGSNCSEDKVV) the composition is skewed to basic and acidic residues. Low complexity predominate over residues 129-143 (ESLPSSSSEQSPLQK). Acidic residues predominate over residues 153 to 164 (ELTEEEAEEPDD). The fork-head DNA-binding region spans 192–294 (RPPLNCSHLI…RVLAFAQRER (103 aa)).

In terms of tissue distribution, expressed in breast cancer cell lines and primary cancer.

Its subcellular location is the nucleus. In Homo sapiens (Human), this protein is Forkhead box protein R2 (FOXR2).